A 475-amino-acid polypeptide reads, in one-letter code: Glycogen synthase (475 aa).

Residue Lys15 participates in ADP-alpha-D-glucose binding.

This sequence belongs to the glycosyltransferase 1 family. Bacterial/plant glycogen synthase subfamily.

The enzyme catalyses [(1-&gt;4)-alpha-D-glucosyl](n) + ADP-alpha-D-glucose = [(1-&gt;4)-alpha-D-glucosyl](n+1) + ADP + H(+). It participates in glycan biosynthesis; glycogen biosynthesis. In terms of biological role, synthesizes alpha-1,4-glucan chains using ADP-glucose. This is Glycogen synthase from Chlamydia abortus (strain DSM 27085 / S26/3) (Chlamydophila abortus).